Consider the following 250-residue polypeptide: Bacteriorhodopsin (250 aa).

The Extracellular portion of the chain corresponds to 1 to 18 (MCCAALAPPMAATVGPES). The helical transmembrane segment at 19–37 (IWLWIGTIGMTLGTLYFVG) threads the bilayer. The Cytoplasmic portion of the chain corresponds to 38 to 51 (RGRGVRDRKMQEFY). Residues 52–70 (IITIFITTIAAAMYFAMAT) form a helical membrane-spanning segment. At 71–86 (GFGVTEVMVGDEALTI) the chain is on the extracellular side. Residues 87 to 104 (YWARYADWLFTTPLLLLD) form a helical membrane-spanning segment. The Cytoplasmic segment spans residues 105–115 (LSLLAGANRNT). A helical transmembrane segment spans residues 116–135 (IATLIGLDVFMIGTGAIAAL). The Extracellular portion of the chain corresponds to 136–142 (SSTPGTR). Residues 143 to 162 (IAWWAISTGALLALLYVLVG) traverse the membrane as a helical segment. Residues 163 to 180 (TLSENARNRAPEVASLFG) are Cytoplasmic-facing. A helical transmembrane segment spans residues 181–199 (RLRNLVIALWFLYPVVWIL). The Extracellular portion of the chain corresponds to 200–212 (GTEGTFGILPLYW). The chain crosses the membrane as a helical span at residues 213–232 (ETAAFMVLDLSAKVGFGVIL). An N6-(retinylidene)lysine modification is found at Lys225. The Cytoplasmic portion of the chain corresponds to 233-250 (LQSRSVLERVATPTAAPT).

The protein belongs to the archaeal/bacterial/fungal opsin family.

The protein localises to the cell membrane. Its function is as follows. Light-driven proton pump. The protein is Bacteriorhodopsin (bop) of Haloterrigena sp. (strain arg-4).